The primary structure comprises 481 residues: MAQPATPRTMAEKVWADHVVAHGIGEGAAREPDLIYIDLHLVHEVTSPQAFDGLRLANRPVRRPDLTIATEDHNVPTVDIDKPIADPVSRTQVETLRRNCAEFGIRLHPMGDAEQGIVHIIGPQLGLTQPGMTVVCGDSHTSTHGAFGALAMGIGTSEVEHVLATQTLPLRPFRTMAVNVDGELPPGVSAKDIILAVIAKIGTGGGQGHVIEYRGSAIESLSMEGRMTICNMSIEAGARAGMVAPDDTTFEFLRGRPHAPTGADWDAAVEAWRQLRTDPGAEFDTEVHLDAAELSPFVTWGTNPGQGVPLSGAVPDPELIVDEGERQAAEKALTYMGLQAGTAMRDVAVDTVFVGSCTNGRIEDLRVVADVLRGRRVADGIRMLVVPGSMRVRAQAESEGLDRIFIDAGAEWRQAGCSMCLGMNPDQLSPGQRCASTSNRNFEGRQGKGGRTHLVSPAVAAATAVRGTLSSPADLSAVPAR.

3 residues coordinate [4Fe-4S] cluster: Cys-357, Cys-417, and Cys-420. Polar residues predominate over residues 429 to 441 (SPGQRCASTSNRN). The disordered stretch occupies residues 429–451 (SPGQRCASTSNRNFEGRQGKGGR).

Belongs to the aconitase/IPM isomerase family. LeuC type 1 subfamily. In terms of assembly, heterodimer of LeuC and LeuD. It depends on [4Fe-4S] cluster as a cofactor.

It carries out the reaction (2R,3S)-3-isopropylmalate = (2S)-2-isopropylmalate. It participates in amino-acid biosynthesis; L-leucine biosynthesis; L-leucine from 3-methyl-2-oxobutanoate: step 2/4. Functionally, catalyzes the isomerization between 2-isopropylmalate and 3-isopropylmalate, via the formation of 2-isopropylmaleate. The sequence is that of 3-isopropylmalate dehydratase large subunit from Mycobacterium sp. (strain KMS).